Consider the following 28-residue polypeptide: Basic phospholipase A2 homolog BmatTX-II (28 aa).

In terms of assembly, monomer. As to expression, expressed by the venom gland.

It is found in the secreted. Functionally, snake venom phospholipase A2 homolog that lacks enzymatic activity. Shows high myotoxic activity, neutrophil activation (demonstrated by activation induction of IL-1beta production), and slight cytotoxicity against Jurkat (leukemia T) and SK-BR-3 (breast adenocarcinoma) tumor cell lines. A model of myotoxic mechanism has been proposed: an apo Lys49-PLA2 is activated by the entrance of a hydrophobic molecule (e.g. fatty acid) at the hydrophobic channel of the protein leading to a reorientation of a monomer. This reorientation causes a transition between 'inactive' to 'active' states, causing alignment of C-terminal and membrane-docking sites (MDoS) side-by-side and putting the membrane-disruption sites (MDiS) in the same plane, exposed to solvent and in a symmetric position for both monomers. The MDoS region stabilizes the toxin on membrane by the interaction of charged residues with phospholipid head groups. Subsequently, the MDiS region destabilizes the membrane with penetration of hydrophobic residues. This insertion causes a disorganization of the membrane, allowing an uncontrolled influx of ions (i.e. calcium and sodium), and eventually triggering irreversible intracellular alterations and cell death. In Bothrops mattogrossensis (Pitviper), this protein is Basic phospholipase A2 homolog BmatTX-II.